A 222-amino-acid polypeptide reads, in one-letter code: MGQKINPNGFRLGVNRDWEAKWYADKNYADTLNEDLRIRKFISEKLADASVSTVEIERAANRINISIHTAKPGMVIGKGGKEVEALRKELSALTNKNVHINIVEIKKPDLDAKLVGEGIARQLEARIAFRRATRQATQRSMRSGAKGIKVQTAGRLNGADMARREWHTEGSVPLHTLRADIDYAWVEAATTYGQIGVKVWINRGEILPQRKNKPSKKAKGGN.

In terms of domain architecture, KH type-2 spans 38–106 (IRKFISEKLA…NVHINIVEIK (69 aa)).

This sequence belongs to the universal ribosomal protein uS3 family. Part of the 30S ribosomal subunit. Forms a tight complex with proteins S10 and S14.

In terms of biological role, binds the lower part of the 30S subunit head. Binds mRNA in the 70S ribosome, positioning it for translation. In Lactobacillus johnsonii (strain CNCM I-12250 / La1 / NCC 533), this protein is Small ribosomal subunit protein uS3.